The chain runs to 228 residues: Ribose-5-phosphate isomerase A (228 aa).

Substrate-binding positions include 31–34, 85–88, and 97–100; these read TGST, DGAD, and KGGG. Glu-106 (proton acceptor) is an active-site residue. Lys-124 lines the substrate pocket.

The protein belongs to the ribose 5-phosphate isomerase family. Homodimer.

It catalyses the reaction aldehydo-D-ribose 5-phosphate = D-ribulose 5-phosphate. It participates in carbohydrate degradation; pentose phosphate pathway; D-ribose 5-phosphate from D-ribulose 5-phosphate (non-oxidative stage): step 1/1. Catalyzes the reversible conversion of ribose-5-phosphate to ribulose 5-phosphate. This chain is Ribose-5-phosphate isomerase A, found in Haloarcula marismortui (strain ATCC 43049 / DSM 3752 / JCM 8966 / VKM B-1809) (Halobacterium marismortui).